We begin with the raw amino-acid sequence, 315 residues long: tRNA dimethylallyltransferase (315 aa).

9–16 (GPTASGKT) serves as a coordination point for ATP. A substrate-binding site is contributed by 11–16 (TASGKT). 2 interaction with substrate tRNA regions span residues 34-37 (DSLL) and 158-162 (QRIQR).

This sequence belongs to the IPP transferase family. Monomer. The cofactor is Mg(2+).

It catalyses the reaction adenosine(37) in tRNA + dimethylallyl diphosphate = N(6)-dimethylallyladenosine(37) in tRNA + diphosphate. Functionally, catalyzes the transfer of a dimethylallyl group onto the adenine at position 37 in tRNAs that read codons beginning with uridine, leading to the formation of N6-(dimethylallyl)adenosine (i(6)A). This is tRNA dimethylallyltransferase from Acidithiobacillus ferrooxidans (strain ATCC 53993 / BNL-5-31) (Leptospirillum ferrooxidans (ATCC 53993)).